Here is a 313-residue protein sequence, read N- to C-terminus: Peroxidase 57 (313 aa).

The signal sequence occupies residues 1-22 (MMKGAKFSSLLVLFFIFPIAFA). 4 disulfide bridges follow: cysteine 33–cysteine 109, cysteine 66–cysteine 71, cysteine 115–cysteine 309, and cysteine 192–cysteine 224. Histidine 64 serves as the catalytic Proton acceptor. Residues aspartate 65, valine 68, glycine 70, aspartate 72, and serine 74 each contribute to the Ca(2+) site. Proline 155 is a substrate binding site. Position 185 (histidine 185) interacts with heme b. Residue threonine 186 participates in Ca(2+) binding. 3 residues coordinate Ca(2+): aspartate 233, serine 236, and aspartate 241.

Belongs to the peroxidase family. Classical plant (class III) peroxidase subfamily. The cofactor is heme b. Ca(2+) is required as a cofactor. Mainly expressed in roots.

The protein localises to the secreted. It carries out the reaction 2 a phenolic donor + H2O2 = 2 a phenolic radical donor + 2 H2O. Functionally, removal of H(2)O(2), oxidation of toxic reductants, biosynthesis and degradation of lignin, suberization, auxin catabolism, response to environmental stresses such as wounding, pathogen attack and oxidative stress. These functions might be dependent on each isozyme/isoform in each plant tissue. The chain is Peroxidase 57 (PER57) from Arabidopsis thaliana (Mouse-ear cress).